We begin with the raw amino-acid sequence, 554 residues long: Glucose-6-phosphate isomerase (554 aa).

The active-site Proton donor is the glutamate 359. Catalysis depends on residues histidine 390 and lysine 518.

The protein belongs to the GPI family.

It localises to the cytoplasm. The catalysed reaction is alpha-D-glucose 6-phosphate = beta-D-fructose 6-phosphate. The protein operates within carbohydrate biosynthesis; gluconeogenesis. Its pathway is carbohydrate degradation; glycolysis; D-glyceraldehyde 3-phosphate and glycerone phosphate from D-glucose: step 2/4. In terms of biological role, catalyzes the reversible isomerization of glucose-6-phosphate to fructose-6-phosphate. This is Glucose-6-phosphate isomerase from Pseudomonas putida (strain ATCC 700007 / DSM 6899 / JCM 31910 / BCRC 17059 / LMG 24140 / F1).